Here is a 176-residue protein sequence, read N- to C-terminus: MNKDDDKEGLAMFSALIDGIKPITQDKRHFRTPLKTKQEIALKEQQLHANSYFSDTYQPLLPIQGPMRWLDDGVDSLELKRLRRGDYQPDLLLDLHGYRQSEAKLELAALIQACVKQQSQCCCVMHGYGSGILKQQVPMWLVQHPMVKAFHQAPKEWGGDAALLVLIDLGELPHRR.

Residues 93–168 (LDLHGYRQSE…GDAALLVLID (76 aa)) enclose the Smr domain.

Belongs to the SmrB family. Associates with collided ribosomes, but not with correctly translating polysomes.

In terms of biological role, acts as a ribosome collision sensor. Detects stalled/collided disomes (pairs of ribosomes where the leading ribosome is stalled and a second ribosome has collided with it) and endonucleolytically cleaves mRNA at the 5' boundary of the stalled ribosome. Stalled/collided disomes form a new interface (primarily via the 30S subunits) that binds SmrB. Cleaved mRNA becomes available for tmRNA ligation, leading to ribosomal subunit dissociation and rescue of stalled ribosomes. This chain is Ribosome rescue factor SmrB, found in Shewanella sp. (strain W3-18-1).